A 1148-amino-acid polypeptide reads, in one-letter code: Autophagy-related protein 11 (1148 aa).

The AIM (Atg8-family-interacting motif) signature appears at 567–570; the sequence is FDDI. The segment covering 699 to 710 has biased composition (basic and acidic residues); that stretch reads KAEASSDVEGNK. Disordered regions lie at residues 699–727, 754–777, and 784–803; these read KAEASSDVEGNKTHVSGSEPMDEVSCVSN, PLDSSMLESQQNNEKGGKDSEAGE, and NSSTAESPQKSLDDNVATGR. Composition is skewed to polar residues over residues 754-767 and 784-793; these read PLDSSMLESQQNNE and NSSTAESPQK. Coiled coils occupy residues 816-868 and 956-996; these read ELRN…HLEN and DKVS…VKTL. T851 carries the phosphothreonine modification. The AIM (Atg8-family-interacting motif) signature appears at 1130–1133; that stretch reads YFIV.

The protein belongs to the ATG11 family. As to quaternary structure, homodimer. Interacts with ATG8E, ATG13A and ATG101. Binds to ATG8E on autophagic vesicles.

Its subcellular location is the cytoplasmic vesicle. It is found in the autophagosome. Functionally, accessory protein involved in autophagy. Acts as a scaffold protein of the ATG1-ATG13 complex for faithful delivery of autophagic vesicles to the vacuole. Involved in the stress-induced phosphorylation of ATG1A for turnover of ATG1-ATG13 complex and proper ATG1-ATG13 complex assembly or activity. Required for selective mitophagy. Required for senescence-induced breakdown of mitochondria-resident proteins and mitochondrial vesicles. Seems not essential for ATG8-mediated autophagy. The protein is Autophagy-related protein 11 of Arabidopsis thaliana (Mouse-ear cress).